The primary structure comprises 398 residues: Phosphoglycerate kinase (398 aa).

Substrate contacts are provided by residues 23 to 25, arginine 38, 61 to 64, arginine 122, and arginine 155; these read DFN and HMGK. ATP-binding positions include lysine 206, glycine 297, glutamate 328, and 354-357; that span reads GGDS.

Belongs to the phosphoglycerate kinase family. Monomer.

It is found in the cytoplasm. It catalyses the reaction (2R)-3-phosphoglycerate + ATP = (2R)-3-phospho-glyceroyl phosphate + ADP. It participates in carbohydrate degradation; glycolysis; pyruvate from D-glyceraldehyde 3-phosphate: step 2/5. The sequence is that of Phosphoglycerate kinase from Clostridium botulinum (strain Loch Maree / Type A3).